The chain runs to 977 residues: Phosphatidylinositol 4-kinase PIK1alpha (977 aa).

Positions 1–125 (MSADITETPN…QAVRNLITKI (125 aa)) constitute a PIK helical domain. Residues 205 to 261 (MSADIPKGSHSDDETATSSSIKPSLSRSASVPRRNTKKTSLSFSSDESEAYTTDDDD) are disordered. A compositionally biased stretch (polar residues) spans 220-233 (ATSSSIKPSLSRSA). Residues 250 to 261 (DESEAYTTDDDD) show a composition bias toward acidic residues. Positions 679–960 (EDWNTKKQRI…FLIGKSLGSM (282 aa)) constitute a PI3K/PI4K catalytic domain. A G-loop region spans residues 685 to 691 (KQRIKKS). Residues 826–834 (QIKDRHNGN) form a catalytic loop region. Residues 845–869 (HIDFGFLLSNSPGSVGFEAAPFKLT) are activation loop.

This sequence belongs to the PI3/PI4-kinase family. Type III PI4K subfamily.

The protein localises to the nucleus. The catalysed reaction is a 1,2-diacyl-sn-glycero-3-phospho-(1D-myo-inositol) + ATP = a 1,2-diacyl-sn-glycero-3-phospho-(1D-myo-inositol 4-phosphate) + ADP + H(+). Functionally, acts on phosphatidylinositol (PI) in the first committed step in the production of the second messenger inositol 1,4,5,-trisphosphate. This Candida albicans (strain SC5314 / ATCC MYA-2876) (Yeast) protein is Phosphatidylinositol 4-kinase PIK1alpha (PIKALPHA).